Reading from the N-terminus, the 397-residue chain is Lysophospholipid transporter LplT (397 aa).

The Periplasmic segment spans residues 1-17 (MSESVHTNTSLWSKGMK). Residues 18–38 (AVIVAQFLSAFGDNALLFATL) traverse the membrane as a helical segment. Residues 39–52 (ALLKAQFYPEWSQP) are Cytoplasmic-facing. The helical transmembrane segment at 53–73 (ILQMVFVGAYILFAPFVGQVA) threads the bilayer. At 74 to 90 (DSFAKGRVMMFANGLKL) the chain is on the periplasmic side. The chain crosses the membrane as a helical span at residues 91 to 111 (LGAASICFGINPFLGYTLVGV). Residues 112-144 (GAAAYSPAKYGILGELTTGSKLVKANGLMEAST) lie on the Cytoplasmic side of the membrane. A helical membrane pass occupies residues 145 to 165 (IAAILLGSVAGGVLADWHVLV). Residue Ala166 is a topological domain, periplasmic. The chain crosses the membrane as a helical span at residues 167 to 187 (LAACALAYGGAVVANIYIPKL). Residues 188 to 226 (AAARPGQSWNLINMTRSFLNACTSLWRNGETRFSLVGTS) lie on the Cytoplasmic side of the membrane. The chain crosses the membrane as a helical span at residues 227–247 (LFWGAGVTLRFLLVLWVPVAL). Over 248 to 256 (GITDNATPT) the chain is Periplasmic. A helical transmembrane segment spans residues 257–277 (YLNAMVAIGIVVGAGAAAKLV). The Cytoplasmic segment spans residues 278 to 280 (TLE). Residues 281–301 (TVSRCMPAGILIGVVVLIFSL) form a helical membrane-spanning segment. Over 302–304 (QHE) the chain is Periplasmic. Residues 305–325 (LLPAYALLMLIGVMGGFFVVP) traverse the membrane as a helical segment. The Cytoplasmic portion of the chain corresponds to 326 to 343 (LNALLQERGKKSVGAGNA). A helical transmembrane segment spans residues 344 to 364 (IAVQNLGENSAMLLMLGIYSL). Topologically, residues 365-366 (AV) are periplasmic. The chain crosses the membrane as a helical span at residues 367–387 (MVGIPVVPIGIGFGALFALAI). At 388–397 (TALWIWQRRH) the chain is on the cytoplasmic side.

The protein belongs to the major facilitator superfamily. LplT (TC 2.A.1.42) family.

It is found in the cell inner membrane. Its function is as follows. Catalyzes the facilitated diffusion of 2-acyl-glycero-3-phosphoethanolamine (2-acyl-GPE) into the cell. This Escherichia coli (strain ATCC 8739 / DSM 1576 / NBRC 3972 / NCIMB 8545 / WDCM 00012 / Crooks) protein is Lysophospholipid transporter LplT.